Consider the following 557-residue polypeptide: Potassium-transporting ATPase potassium-binding subunit (557 aa).

Helical transmembrane passes span 5–25 (GFLL…PLGS), 63–83 (LSAI…MLLG), 132–152 (GLTV…FALI), 170–190 (LLRI…LFFI), 253–273 (FVQM…FGEV), 283–303 (LLWA…WAEV), 329–349 (VLVS…AVIA), 356–376 (ALGG…FGGV), 379–399 (GLYG…LMIG), 416–436 (LTAL…ALAM), 484–504 (LLAL…MAIA), and 526–546 (LFVG…FIPA).

It belongs to the KdpA family. As to quaternary structure, the system is composed of three essential subunits: KdpA, KdpB and KdpC.

The protein localises to the cell inner membrane. Functionally, part of the high-affinity ATP-driven potassium transport (or Kdp) system, which catalyzes the hydrolysis of ATP coupled with the electrogenic transport of potassium into the cytoplasm. This subunit binds the periplasmic potassium ions and delivers the ions to the membrane domain of KdpB through an intramembrane tunnel. The protein is Potassium-transporting ATPase potassium-binding subunit of Escherichia coli (strain UTI89 / UPEC).